Here is a 505-residue protein sequence, read N- to C-terminus: L-carnitine/gamma-butyrobetaine antiporter (505 aa).

12 helical membrane-spanning segments follow: residues 10–30, 51–71, 92–112, 143–163, 195–215, 231–251, 263–283, 316–336, 347–367, 403–423, 446–466, and 475–495; these read IEPK…WLTV, WGWA…WLVF, IFMM…SIEI, GPLP…FFFV, FYLV…TPLV, LDAI…ACGL, SYLS…SFIM, WTVF…IFLA, LCFG…TVLG, LSTA…VTLI, LLVR…LLAL, and AIIA…LSFI.

It belongs to the BCCT transporter (TC 2.A.15) family. CaiT subfamily. Homotrimer.

The protein resides in the cell inner membrane. The enzyme catalyses 4-(trimethylamino)butanoate(in) + (R)-carnitine(out) = 4-(trimethylamino)butanoate(out) + (R)-carnitine(in). It participates in amine and polyamine metabolism; carnitine metabolism. Catalyzes the exchange of L-carnitine for gamma-butyrobetaine. In Salmonella typhi, this protein is L-carnitine/gamma-butyrobetaine antiporter.